The primary structure comprises 427 residues: 3-phosphoshikimate 1-carboxyvinyltransferase (427 aa).

3 residues coordinate 3-phosphoshikimate: Lys27, Ser28, and Arg32. Lys27 is a binding site for phosphoenolpyruvate. Residues Gly95 and Arg123 each coordinate phosphoenolpyruvate. Residues Ser166, Ser167, Gln168, Ser192, Asp305, and Lys332 each contribute to the 3-phosphoshikimate site. Gln168 contributes to the phosphoenolpyruvate binding site. Asp305 acts as the Proton acceptor in catalysis. Residues Arg336 and Arg377 each coordinate phosphoenolpyruvate.

Belongs to the EPSP synthase family. As to quaternary structure, monomer.

It is found in the cytoplasm. The catalysed reaction is 3-phosphoshikimate + phosphoenolpyruvate = 5-O-(1-carboxyvinyl)-3-phosphoshikimate + phosphate. The protein operates within metabolic intermediate biosynthesis; chorismate biosynthesis. Its function is as follows. Catalyzes the transfer of the enolpyruvyl moiety of phosphoenolpyruvate (PEP) to the 5-hydroxyl of shikimate-3-phosphate (S3P) to produce enolpyruvyl shikimate-3-phosphate and inorganic phosphate. This chain is 3-phosphoshikimate 1-carboxyvinyltransferase, found in Aeropyrum pernix (strain ATCC 700893 / DSM 11879 / JCM 9820 / NBRC 100138 / K1).